A 508-amino-acid chain; its full sequence is GMP synthase [glutamine-hydrolyzing] (508 aa).

One can recognise a Glutamine amidotransferase type-1 domain in the interval 1-189; it reads MILVLDFGSQ…ALLVCGCEKT (189 aa). Residue cysteine 78 is the Nucleophile of the active site. Active-site residues include histidine 163 and glutamate 165. The 194-residue stretch at 190-383 folds into the GMPS ATP-PPase domain; that stretch reads WGMQHFAQRE…LGVSQDFLMR (194 aa). Residue 217–223 coordinates ATP; the sequence is SGGVDST.

As to quaternary structure, homodimer.

The catalysed reaction is XMP + L-glutamine + ATP + H2O = GMP + L-glutamate + AMP + diphosphate + 2 H(+). It functions in the pathway purine metabolism; GMP biosynthesis; GMP from XMP (L-Gln route): step 1/1. Functionally, catalyzes the synthesis of GMP from XMP. This chain is GMP synthase [glutamine-hydrolyzing], found in Helicobacter pylori (strain P12).